The sequence spans 79 residues: MATGTPAAELRELTEEELVSRLRESKEELFNLRFQMATGQLDNNRRLRVVRHEIARIYTVMRERELGLATGPAGKGDAA.

The protein belongs to the universal ribosomal protein uL29 family.

This Nocardia farcinica (strain IFM 10152) protein is Large ribosomal subunit protein uL29.